A 689-amino-acid chain; its full sequence is Glycine--tRNA ligase beta subunit (689 aa).

Belongs to the class-II aminoacyl-tRNA synthetase family. In terms of assembly, tetramer of two alpha and two beta subunits.

The protein localises to the cytoplasm. The enzyme catalyses tRNA(Gly) + glycine + ATP = glycyl-tRNA(Gly) + AMP + diphosphate. This Acinetobacter baumannii (strain AB307-0294) protein is Glycine--tRNA ligase beta subunit.